The following is a 337-amino-acid chain: Glyceraldehyde-3-phosphate dehydrogenase (337 aa).

NAD(+) contacts are provided by residues 12–13 (RI), aspartate 34, and lysine 79. D-glyceraldehyde 3-phosphate is bound by residues 150–152 (SCT), threonine 181, 210–211 (TG), and arginine 233. The active-site Nucleophile is cysteine 151. Asparagine 315 lines the NAD(+) pocket.

This sequence belongs to the glyceraldehyde-3-phosphate dehydrogenase family. As to quaternary structure, homotetramer.

It is found in the cytoplasm. It catalyses the reaction D-glyceraldehyde 3-phosphate + phosphate + NAD(+) = (2R)-3-phospho-glyceroyl phosphate + NADH + H(+). It functions in the pathway carbohydrate degradation; glycolysis; pyruvate from D-glyceraldehyde 3-phosphate: step 1/5. This chain is Glyceraldehyde-3-phosphate dehydrogenase (GPD1), found in Cochliobolus heterostrophus (Southern corn leaf blight fungus).